We begin with the raw amino-acid sequence, 260 residues long: G patch domain-containing protein 11 (260 aa).

Residues M25 to M61 are a coiled coil. The tract at residues R33–D60 is disordered. Residues C69–L115 enclose the G-patch domain. At K123 the chain carries N6-acetyllysine. A disordered region spans residues W187–E212. The segment covering E192–K210 has biased composition (acidic residues).

It belongs to the GPATCH11 family.

The protein resides in the chromosome. The protein localises to the centromere. It is found in the kinetochore. This is G patch domain-containing protein 11 (GPATCH11) from Bos taurus (Bovine).